A 236-amino-acid polypeptide reads, in one-letter code: 7-cyano-7-deazaguanine synthase (236 aa).

An ATP-binding site is contributed by 7-17; the sequence is CSGGLDSVSLA. The Zn(2+) site is built by C185, C193, C196, and C199.

Belongs to the QueC family. Zn(2+) is required as a cofactor.

The enzyme catalyses 7-carboxy-7-deazaguanine + NH4(+) + ATP = 7-cyano-7-deazaguanine + ADP + phosphate + H2O + H(+). It participates in purine metabolism; 7-cyano-7-deazaguanine biosynthesis. Its function is as follows. Catalyzes the ATP-dependent conversion of 7-carboxy-7-deazaguanine (CDG) to 7-cyano-7-deazaguanine (preQ(0)). This is 7-cyano-7-deazaguanine synthase from Sinorhizobium fredii (strain NBRC 101917 / NGR234).